Here is a 160-residue protein sequence, read N- to C-terminus: UPF0758 protein YfjY (160 aa).

In terms of domain architecture, MPN spans 38–160; that stretch reads AFTSTQAARD…IYSFAEHGLL (123 aa). Residues His-109, His-111, and Asp-122 each contribute to the Zn(2+) site. The short motif at 109-122 is the JAMM motif element; that stretch reads HNHPSGDTTPSQAD.

The protein belongs to the UPF0758 family.

The polypeptide is UPF0758 protein YfjY (yfjY) (Escherichia coli (strain K12)).